The following is a 66-amino-acid chain: Large ribosomal subunit protein bL35c (66 aa).

Belongs to the bacterial ribosomal protein bL35 family.

The protein localises to the plastid. The protein resides in the chloroplast. The polypeptide is Large ribosomal subunit protein bL35c (Gracilaria tenuistipitata var. liui (Red alga)).